An 850-amino-acid polypeptide reads, in one-letter code: Protein translocase subunit SecA 2 (850 aa).

Residues Gln-83, 101–105 (GEGKT), and Asp-491 contribute to the ATP site.

It belongs to the SecA family. In terms of assembly, monomer and homodimer. Part of the essential Sec protein translocation apparatus which comprises SecA, SecYEG and auxiliary proteins SecDF. Other proteins may also be involved.

The protein resides in the cell membrane. Its subcellular location is the cytoplasm. It carries out the reaction ATP + H2O + cellular proteinSide 1 = ADP + phosphate + cellular proteinSide 2.. Functionally, part of the Sec protein translocase complex. Interacts with the SecYEG preprotein conducting channel. Has a central role in coupling the hydrolysis of ATP to the transfer of proteins into and across the cell membrane, serving as an ATP-driven molecular motor driving the stepwise translocation of polypeptide chains across the membrane. The sequence is that of Protein translocase subunit SecA 2 from Mycolicibacterium vanbaalenii (strain DSM 7251 / JCM 13017 / BCRC 16820 / KCTC 9966 / NRRL B-24157 / PYR-1) (Mycobacterium vanbaalenii).